The sequence spans 219 residues: Glutathione S-transferase 3 (219 aa).

Residues 3–82 (DEVVLLDTWA…YIDEVWNDKS (80 aa)) form the GST N-terminal domain. Residues S13, I54, and 66-67 (ES) each bind glutathione. One can recognise a GST C-terminal domain in the interval 88 to 216 (DPYKRSQARF…GLIVELQKTL (129 aa)).

The protein belongs to the GST superfamily. HSP26 family. Homodimer. degradation; (R)-lactate from methylglyoxal: step 1/2.

It catalyses the reaction RX + glutathione = an S-substituted glutathione + a halide anion + H(+). Its function is as follows. Conjugation of reduced glutathione to a wide number of exogenous and endogenous hydrophobic electrophiles. Involved in the detoxification of certain herbicides. This Glycine max (Soybean) protein is Glutathione S-transferase 3 (GST3).